Here is a 533-residue protein sequence, read N- to C-terminus: E3 ubiquitin-protein ligase MGRN1 (533 aa).

The N-myristoyl glycine moiety is linked to residue Gly-2. Residues 278–317 (ECVVCLSDLRDTLILPCRHLCLCTSCADTLRYQANNCPIC) form an RING-type zinc finger. Positions 385 to 388 (PSAP) match the Required for TSG101-binding motif. At Tyr-390 the chain carries Phosphotyrosine. Positions 421–519 (QKGKTQSKSP…QPVPPADIYL (99 aa)) are disordered. The segment covering 423–439 (GKTQSKSPDSTLRSPSS) has biased composition (polar residues). A phosphoserine mark is found at Ser-429, Ser-450, and Ser-502. Over residues 443-454 (EEDEEKLSEDPE) the composition is skewed to acidic residues.

As to quaternary structure, interacts with MC1R and MC4R. Interacts with TSG101. Interacts with mislocalized cytosolically exposed PRNP; this interaction alters MGRN1 subcellular location and causes lysosomal enlargement. Autoubiquitinated in vitro.

It is found in the cytoplasm. It localises to the cytosol. The protein resides in the cell membrane. Its subcellular location is the early endosome. It carries out the reaction S-ubiquitinyl-[E2 ubiquitin-conjugating enzyme]-L-cysteine + [acceptor protein]-L-lysine = [E2 ubiquitin-conjugating enzyme]-L-cysteine + N(6)-ubiquitinyl-[acceptor protein]-L-lysine.. It participates in protein modification; protein ubiquitination. Functionally, E3 ubiquitin-protein ligase. Mediates TSG101 monoubiquitination at multiple sites. Plays a role in the regulation of endosome-to-lysosome trafficking. Impairs MC1R- and MC4R-signaling by competing with GNAS-binding to MCRs and inhibiting agonist-induced cAMP production. Does not inhibit ADRB2-signaling. Does not promote MC1R ubiquitination. Also acts as a negative regulator of hedgehog signaling. The polypeptide is E3 ubiquitin-protein ligase MGRN1 (Mgrn1) (Rattus norvegicus (Rat)).